We begin with the raw amino-acid sequence, 357 residues long: MNAVAKIEQHNPIGTDGFEFVEFTAPDAKGIEQLRQLFNMMGFTETAKHRSKEVFLFQQNDINIVLNGSPTGHVHEFALKHGPSACAMAFRVKNASQAAAYAESQGAKLVGSHANFGELNIPSLEGIGGSLLYLVDRYGDRSIYDVDFEFIEGRSANDNSVGLTYIDHLTHNVKRGQMDVWSGFYERIANFREIRYFDIEGKLTGLFSRAMTAPCGKIRIPINESADDTSQIEEFIREYHGEGIQHIALTTDDIYATVRKLRDNGVKFMSTPDTYYEKVDTRVAGHGEPLEQLRELNLLIDGAPGDDGILLQIFTDTVIGPIFFEIIQRKGNQGFGEGNFKALFESIEEDQIRRGVI.

VOC domains follow at residues 17–137 (GFEF…LVDR) and 165–316 (YIDH…IFTD). Fe cation is bound by residues His-168, His-246, and Glu-325.

Belongs to the 4HPPD family. As to quaternary structure, homotetramer. It depends on Fe cation as a cofactor.

The catalysed reaction is 3-(4-hydroxyphenyl)pyruvate + O2 = homogentisate + CO2. It participates in amino-acid degradation; L-phenylalanine degradation; acetoacetate and fumarate from L-phenylalanine: step 3/6. The polypeptide is 4-hydroxyphenylpyruvate dioxygenase (hpd) (Pseudomonas aeruginosa (strain ATCC 15692 / DSM 22644 / CIP 104116 / JCM 14847 / LMG 12228 / 1C / PRS 101 / PAO1)).